Reading from the N-terminus, the 277-residue chain is Undecaprenyl-diphosphatase (277 aa).

6 helical membrane passes run 88–108 (MGWL…LFQD), 117–137 (MWIV…ADAV), 157–179 (FAQA…AGLL), 191–211 (SFLL…YKTV), 227–247 (LATV…LKFV), and 255–275 (FVWY…FNVI).

This sequence belongs to the UppP family.

It localises to the cell membrane. It carries out the reaction di-trans,octa-cis-undecaprenyl diphosphate + H2O = di-trans,octa-cis-undecaprenyl phosphate + phosphate + H(+). Its function is as follows. Catalyzes the dephosphorylation of undecaprenyl diphosphate (UPP). Confers resistance to bacitracin. The sequence is that of Undecaprenyl-diphosphatase from Paenarthrobacter aurescens (strain TC1).